Reading from the N-terminus, the 256-residue chain is Triosephosphate isomerase (256 aa).

Asparagine 10–lysine 12 is a binding site for substrate. Histidine 97 functions as the Electrophile in the catalytic mechanism. Glutamate 169 acts as the Proton acceptor in catalysis. Residues glycine 175, serine 214, and glycine 235–glycine 236 contribute to the substrate site.

It belongs to the triosephosphate isomerase family. As to quaternary structure, homodimer.

Its subcellular location is the cytoplasm. The catalysed reaction is D-glyceraldehyde 3-phosphate = dihydroxyacetone phosphate. The protein operates within carbohydrate biosynthesis; gluconeogenesis. It functions in the pathway carbohydrate degradation; glycolysis; D-glyceraldehyde 3-phosphate from glycerone phosphate: step 1/1. In terms of biological role, involved in the gluconeogenesis. Catalyzes stereospecifically the conversion of dihydroxyacetone phosphate (DHAP) to D-glyceraldehyde-3-phosphate (G3P). This is Triosephosphate isomerase from Actinobacillus pleuropneumoniae serotype 7 (strain AP76).